We begin with the raw amino-acid sequence, 301 residues long: Ribonuclease Z (301 aa).

Zn(2+) is bound by residues histidine 63, histidine 65, aspartate 67, histidine 68, histidine 141, aspartate 204, and histidine 262. Aspartate 67 functions as the Proton acceptor in the catalytic mechanism.

It belongs to the RNase Z family. As to quaternary structure, homodimer. It depends on Zn(2+) as a cofactor.

The catalysed reaction is Endonucleolytic cleavage of RNA, removing extra 3' nucleotides from tRNA precursor, generating 3' termini of tRNAs. A 3'-hydroxy group is left at the tRNA terminus and a 5'-phosphoryl group is left at the trailer molecule.. Functionally, zinc phosphodiesterase, which displays some tRNA 3'-processing endonuclease activity. Probably involved in tRNA maturation, by removing a 3'-trailer from precursor tRNA. This chain is Ribonuclease Z, found in Streptomyces coelicolor (strain ATCC BAA-471 / A3(2) / M145).